The chain runs to 982 residues: E3 ubiquitin-protein ligase CBL-B (982 aa).

The interval 35–167 is 4H; sequence PPKQAAADRR…KAIFPNGQFQ (133 aa). In terms of domain architecture, Cbl-PTB spans 35–343; that stretch reads PPKQAAADRR…GRSYNPDLTG (309 aa). The EF-hand-like stretch occupies residues 168–240; it reads GDNFRITKAD…FEFDIFTRLF (73 aa). Ca(2+)-binding residues include Asp221, Thr223, Asn225, Tyr227, and Glu232. The segment at 241-343 is SH2-like; that stretch reads QPWGSILRNW…GRSYNPDLTG (103 aa). A Phosphoserine; by PKC/PRKCQ modification is found at Ser282. Residue Arg286 coordinates 4-O-phospho-L-tyrosine. A linker region spans residues 344–372; it reads LCEPTPHDHIKVTQEQYELYCEMGSTFQL. A Phosphotyrosine modification is found at Tyr363. The segment at 373-412 adopts an RING-type zinc-finger fold; that stretch reads CKICAENDKDVKIEPCGHLMCTSCLTAWQESDGQGCPFCR. Residues 466–571 form a disordered region; that stretch reads NVRKCTDRQN…PPPIPPDNRL (106 aa). Residues 473–486 are compositionally biased toward polar residues; it reads RQNSPVTSPGSSPL. Residues Ser476, Ser480, Ser484, Ser521, Ser525, and Ser529 each carry the phosphoserine modification. Residues 543 to 568 are interaction with VAV1; sequence PLPAPPPPLRDPPPPPPERPPPIPPD. The span at 544 to 567 shows a compositional bias: pro residues; sequence LPAPPPPLRDPPPPPPERPPPIPP. Position 634 is a phosphoserine (Ser634). Phosphotyrosine occurs at positions 665 and 709. Disordered stretches follow at residues 688–731 and 769–929; these read GPLA…NVKP and FDSA…EAAL. Residues 715–725 are compositionally biased toward polar residues; it reads HPVSLNSQPSH. Residues 819-828 are compositionally biased toward pro residues; sequence PSLPPPPPPA. A compositionally biased stretch (low complexity) spans 838–848; it reads PPGSSSRPSSG. Residues 880-899 are compositionally biased toward polar residues; it reads VKTNRTSQDYDQLPSCSDGS. Tyr889 carries the phosphotyrosine modification. The segment at 891–927 is interaction with SH3KBP1; it reads QLPSCSDGSQAPARPPKPRPRRTAPEIHHRKPHGPEA. The segment covering 906-922 has biased composition (basic residues); sequence PKPRPRRTAPEIHHRKP. Residues 931–970 form the UBA domain; that stretch reads NVDAKIAKLMGEGYAFEEVKRALEIAQNNVEVARSILREF.

In terms of assembly, interacts with SH3 domain-containing proteins LCK, CRK and SORBS1. Interacts with LCP2 and ZAP70. Interacts with CBL. Interacts with SH3 domain-containing proteins VAV1, FYN, FGR, PLCG1, GRB2, CRKL, PIK3R1 and SH3KBP1/CIN85. Identified in heterotrimeric complexes with SH3KBP1/CIN85, CD2AP and ARHGEF7, where one CBLB peptide binds two copies of the other protein. Interacts with poly-ubiquitinated proteins. Dimerization is required for the binding of poly-ubiquitin, but not for the binding of mono-ubiquitin. Interacts with EGFR (phosphorylated). Interacts with IFT20. In terms of processing, phosphorylated on tyrosine and serine residues upon TCR or BCR activation, and upon various types of cell stimulation. Post-translationally, auto-ubiquitinated upon EGF-mediated cell activation or upon T-cell costimulation by CD28; which promotes proteasomal degradation. In terms of tissue distribution, expressed in placenta, heart, lung, kidney, spleen, ovary and testis, as well as fetal brain and liver and hematopoietic cell lines, but not in adult brain, liver, pancreas, salivary gland, or skeletal muscle. Present in lymphocytes (at protein level).

The protein resides in the cytoplasm. It carries out the reaction S-ubiquitinyl-[E2 ubiquitin-conjugating enzyme]-L-cysteine + [acceptor protein]-L-lysine = [E2 ubiquitin-conjugating enzyme]-L-cysteine + N(6)-ubiquitinyl-[acceptor protein]-L-lysine.. It participates in protein modification; protein ubiquitination. E3 ubiquitin-protein ligase which accepts ubiquitin from specific E2 ubiquitin-conjugating enzymes, and transfers it to substrates, generally promoting their degradation by the proteasome. Negatively regulates TCR (T-cell receptor), BCR (B-cell receptor) and FCER1 (high affinity immunoglobulin epsilon receptor) signal transduction pathways. In naive T-cells, inhibits VAV1 activation upon TCR engagement and imposes a requirement for CD28 costimulation for proliferation and IL-2 production. Also acts by promoting PIK3R1/p85 ubiquitination, which impairs its recruitment to the TCR and subsequent activation. In activated T-cells, inhibits PLCG1 activation and calcium mobilization upon restimulation and promotes anergy. In B-cells, acts by ubiquitinating SYK and promoting its proteasomal degradation. Slightly promotes SRC ubiquitination. May be involved in EGFR ubiquitination and internalization. May be functionally coupled with the E2 ubiquitin-protein ligase UB2D3. In association with CBL, required for proper feedback inhibition of ciliary platelet-derived growth factor receptor-alpha (PDGFRA) signaling pathway via ubiquitination and internalization of PDGFRA. This chain is E3 ubiquitin-protein ligase CBL-B (CBLB), found in Homo sapiens (Human).